Reading from the N-terminus, the 222-residue chain is Kunitz trypsin inhibitor 3 (222 aa).

A signal peptide spans 1-23; that stretch reads MEKLTLSFITLTVLSAIFTAASA. Residue N65 is glycosylated (N-linked (GlcNAc...) asparagine). Cystine bridges form between C72–C119 and C165–C173. N-linked (GlcNAc...) asparagine glycosylation occurs at N175.

Belongs to the protease inhibitor I3 (leguminous Kunitz-type inhibitor) family.

In terms of biological role, exhibits Kunitz trypsin protease inhibitor activity. The protein is Kunitz trypsin inhibitor 3 of Arabidopsis thaliana (Mouse-ear cress).